The following is a 341-amino-acid chain: UPF0283 membrane protein HD_1769 (341 aa).

The next 3 membrane-spanning stretches (helical) occupy residues Leu-57–Ile-77, Ile-86–Ile-106, and Glu-204–Trp-224.

The protein belongs to the UPF0283 family.

The protein resides in the cell inner membrane. The sequence is that of UPF0283 membrane protein HD_1769 from Haemophilus ducreyi (strain 35000HP / ATCC 700724).